Reading from the N-terminus, the 77-residue chain is MKLIIFTGLVLFAIVSLIEAEEESGRGCILLYGECTKATDSCCSNLICDCYRKLEKGVQIARQCFCSEKDVIYKKDI.

The N-terminal stretch at 1-20 (MKLIIFTGLVLFAIVSLIEA) is a signal peptide. The propeptide occupies 21–26 (EEESGR).

This sequence belongs to the neurotoxin 19 (CSTX) family. 10 (U11-Lctx) subfamily. Post-translationally, contains 4 disulfide bonds. Expressed by the venom gland.

It localises to the secreted. The chain is U11-lycotoxin-Ls1d from Lycosa singoriensis (Wolf spider).